The chain runs to 176 residues: ATP synthase subunit b (176 aa).

The helical transmembrane segment at 24–43 (FAFRVVNFVIFAGIIWKAAG) threads the bilayer.

The protein belongs to the ATPase B chain family. In terms of assembly, F-type ATPases have 2 components, F(1) - the catalytic core - and F(0) - the membrane proton channel. F(1) has five subunits: alpha(3), beta(3), gamma(1), delta(1), epsilon(1). F(0) has three main subunits: a(1), b(2) and c(10-14). The alpha and beta chains form an alternating ring which encloses part of the gamma chain. F(1) is attached to F(0) by a central stalk formed by the gamma and epsilon chains, while a peripheral stalk is formed by the delta and b chains.

The protein localises to the cell inner membrane. In terms of biological role, f(1)F(0) ATP synthase produces ATP from ADP in the presence of a proton or sodium gradient. F-type ATPases consist of two structural domains, F(1) containing the extramembraneous catalytic core and F(0) containing the membrane proton channel, linked together by a central stalk and a peripheral stalk. During catalysis, ATP synthesis in the catalytic domain of F(1) is coupled via a rotary mechanism of the central stalk subunits to proton translocation. Functionally, component of the F(0) channel, it forms part of the peripheral stalk, linking F(1) to F(0). The chain is ATP synthase subunit b from Nitratidesulfovibrio vulgaris (strain ATCC 29579 / DSM 644 / CCUG 34227 / NCIMB 8303 / VKM B-1760 / Hildenborough) (Desulfovibrio vulgaris).